Reading from the N-terminus, the 284-residue chain is 4-hydroxybenzoate octaprenyltransferase (284 aa).

8 helical membrane-spanning segments follow: residues 16–36, 40–60, 91–111, 132–152, 157–177, 207–227, 231–251, and 259–279; these read PIGI…ASDG, WTLV…GCAV, LLVA…LNTL, FFAI…PMGF, NTVP…SVAY, AIIM…GWQF, IWFV…YTLI, and CFAA…GVAL.

It belongs to the UbiA prenyltransferase family. Requires Mg(2+) as cofactor.

It is found in the cell inner membrane. It catalyses the reaction all-trans-octaprenyl diphosphate + 4-hydroxybenzoate = 4-hydroxy-3-(all-trans-octaprenyl)benzoate + diphosphate. It functions in the pathway cofactor biosynthesis; ubiquinone biosynthesis. In terms of biological role, catalyzes the prenylation of para-hydroxybenzoate (PHB) with an all-trans polyprenyl group. Mediates the second step in the final reaction sequence of ubiquinone-8 (UQ-8) biosynthesis, which is the condensation of the polyisoprenoid side chain with PHB, generating the first membrane-bound Q intermediate 3-octaprenyl-4-hydroxybenzoate. This Janthinobacterium sp. (strain Marseille) (Minibacterium massiliensis) protein is 4-hydroxybenzoate octaprenyltransferase.